The following is a 286-amino-acid chain: Ribosome-inactivating protein beta-momorcharin (286 aa).

A signal peptide spans 1–23; that stretch reads MVKCLLLSFLIIAIFIGVPTAKG. N-linked (GlcNAc...) asparagine glycosylation occurs at asparagine 74. Residues tyrosine 93, tyrosine 132, glutamate 181, and arginine 184 contribute to the active site.

This sequence belongs to the ribosome-inactivating protein family. Type 1 RIP subfamily. In terms of processing, bound to a branched hexasaccharide.

It carries out the reaction Endohydrolysis of the N-glycosidic bond at one specific adenosine on the 28S rRNA.. Functionally, irreversibly relaxes supercoiled DNA and catalyzes double-stranded breakage. Also acts as a ribosome inactivating protein. In Momordica charantia (Bitter gourd), this protein is Ribosome-inactivating protein beta-momorcharin (MAP30).